The primary structure comprises 613 residues: Portal protein (613 aa).

The disordered stretch occupies residues 577-613 (ATGGDHGIRQAPSARGDTEPDHAKSKPARDPPPGAGS). The segment covering 592–605 (GDTEPDHAKSKPAR) has biased composition (basic and acidic residues).

This sequence belongs to the herpesviridae portal protein family. Homododecamerizes. Interacts with terminase subunits TRM1 and TRM3.

It is found in the virion. Its subcellular location is the host nucleus. It localises to the host cytoplasm. Functionally, forms a portal in the viral capsid through which viral DNA is translocated during DNA packaging. Assembles as a dodecamer at a single fivefold axe of the T=16 icosahedric capsid. Binds to the molecular motor that translocates the viral DNA, termed terminase. The sequence is that of Portal protein from Epstein-Barr virus (strain B95-8) (HHV-4).